The following is a 148-amino-acid chain: Nucleoside diphosphate kinase (148 aa).

The ATP site is built by Lys9, Phe57, Arg85, Thr91, Arg102, and Asn112. Phosphothreonine is present on Thr91. The active-site Pros-phosphohistidine intermediate is His115. Residue Ser122 is modified to Phosphoserine.

The protein belongs to the NDK family. In terms of assembly, homotetramer. The cofactor is Mg(2+).

It is found in the cytoplasm. It catalyses the reaction a 2'-deoxyribonucleoside 5'-diphosphate + ATP = a 2'-deoxyribonucleoside 5'-triphosphate + ADP. The enzyme catalyses a ribonucleoside 5'-diphosphate + ATP = a ribonucleoside 5'-triphosphate + ADP. Major role in the synthesis of nucleoside triphosphates other than ATP. The ATP gamma phosphate is transferred to the NDP beta phosphate via a ping-pong mechanism, using a phosphorylated active-site intermediate. In Oceanobacillus iheyensis (strain DSM 14371 / CIP 107618 / JCM 11309 / KCTC 3954 / HTE831), this protein is Nucleoside diphosphate kinase.